Reading from the N-terminus, the 177-residue chain is Large ribosomal subunit protein uL6 (177 aa).

It belongs to the universal ribosomal protein uL6 family. As to quaternary structure, part of the 50S ribosomal subunit.

In terms of biological role, this protein binds to the 23S rRNA, and is important in its secondary structure. It is located near the subunit interface in the base of the L7/L12 stalk, and near the tRNA binding site of the peptidyltransferase center. The chain is Large ribosomal subunit protein uL6 from Methylococcus capsulatus (strain ATCC 33009 / NCIMB 11132 / Bath).